We begin with the raw amino-acid sequence, 189 residues long: Elongation factor P (189 aa).

This sequence belongs to the elongation factor P family.

The protein resides in the cytoplasm. The protein operates within protein biosynthesis; polypeptide chain elongation. In terms of biological role, involved in peptide bond synthesis. Stimulates efficient translation and peptide-bond synthesis on native or reconstituted 70S ribosomes in vitro. Probably functions indirectly by altering the affinity of the ribosome for aminoacyl-tRNA, thus increasing their reactivity as acceptors for peptidyl transferase. The polypeptide is Elongation factor P (Rhizobium etli (strain CIAT 652)).